The sequence spans 496 residues: Cyclin-L1 (496 aa).

Cyclin-like regions lie at residues 68-170 (ELIQ…RILK) and 183-267 (KIIV…TTLR). Residues 301 to 496 (NPDGTPAILS…SHSGHGRHRR (196 aa)) form a disordered region. The span at 322–347 (SPRDVKTEEKSPNFAKVKREMDDKQS) shows a compositional bias: basic and acidic residues. 4 stretches are compositionally biased toward basic residues: residues 358-392 (ENKR…RRSR), 412-426 (RRHH…KLKH), 434-446 (RHAH…HSPS), and 456-468 (KKHR…HRER). The tract at residues 363–406 (RSVSRSRSRTKSRSRSHSPRRHYNNRRRSRSGTYSSRSRSRSRS) is RS. Over residues 469-478 (RERSRSFERS) the composition is skewed to basic and acidic residues. A compositionally biased stretch (basic residues) spans 479–496 (HKNKHHGSSHSGHGRHRR).

This sequence belongs to the cyclin family. Cyclin L subfamily.

The protein localises to the nucleus speckle. It is found in the nucleus. The protein resides in the nucleoplasm. Its function is as follows. Involved in pre-mRNA splicing. The polypeptide is Cyclin-L1 (ccnl1) (Xenopus laevis (African clawed frog)).